The following is a 437-amino-acid chain: Serine carboxypeptidase-like 9 (437 aa).

The signal sequence occupies residues 1 to 21 (MSLILKFMLLILLVSSHHVRS). An N-linked (GlcNAc...) asparagine glycan is attached at Asn101. Residue Ser175 is part of the active site. Cystine bridges form between Cys243–Cys257 and Cys281–Cys293. N-linked (GlcNAc...) asparagine glycosylation is found at Asn307 and Asn346. Asp362 is an active-site residue. The N-linked (GlcNAc...) asparagine glycan is linked to Asn378. His415 is a catalytic residue.

This sequence belongs to the peptidase S10 family. As to expression, expressed in seedlings, leaves, flowers and siliques.

It localises to the secreted. The catalysed reaction is 2 1-O-(trans-sinapoyl)-beta-D-glucose = 1,2-di-O-sinapoyl beta-D-glucose + D-glucose. Its function is as follows. Catalyzes the formation of 1,2-bis-O-sinapoyl beta-D-glucoside and an unidentified compound 1. This Arabidopsis thaliana (Mouse-ear cress) protein is Serine carboxypeptidase-like 9 (SCPL9).